Here is a 427-residue protein sequence, read N- to C-terminus: Putative B3 domain-containing protein Os04g0346900 (427 aa).

2 DNA-binding regions (TF-B3) span residues Leu25–Thr118 and Lys140–Asn236. The interval Thr253–Thr309 is disordered. Residues Ser263 to Ser273 are compositionally biased toward basic residues. Positions Trp320 to Cys427 form a DNA-binding region, TF-B3 3.

The protein localises to the nucleus. This is Putative B3 domain-containing protein Os04g0346900 from Oryza sativa subsp. japonica (Rice).